Here is a 337-residue protein sequence, read N- to C-terminus: RNA 3'-terminal phosphate cyclase (337 aa).

Residues glutamine 101 and 282-285 (HMSD) contribute to the ATP site. Residue histidine 306 is the Tele-AMP-histidine intermediate of the active site.

This sequence belongs to the RNA 3'-terminal cyclase family. Type 1 subfamily.

The protein resides in the cytoplasm. It carries out the reaction a 3'-end 3'-phospho-ribonucleotide-RNA + ATP = a 3'-end 2',3'-cyclophospho-ribonucleotide-RNA + AMP + diphosphate. Catalyzes the conversion of 3'-phosphate to a 2',3'-cyclic phosphodiester at the end of RNA. The mechanism of action of the enzyme occurs in 3 steps: (A) adenylation of the enzyme by ATP; (B) transfer of adenylate to an RNA-N3'P to produce RNA-N3'PP5'A; (C) and attack of the adjacent 2'-hydroxyl on the 3'-phosphorus in the diester linkage to produce the cyclic end product. The biological role of this enzyme is unknown but it is likely to function in some aspects of cellular RNA processing. This chain is RNA 3'-terminal phosphate cyclase, found in Saccharolobus islandicus (strain M.16.27) (Sulfolobus islandicus).